The following is a 552-amino-acid chain: Chaperonin GroEL (552 aa).

ATP contacts are provided by residues 30-33 (TLGP), Lys51, 87-91 (DGTTT), Gly415, 480-482 (NAA), and Asp496.

The protein belongs to the chaperonin (HSP60) family. Forms a cylinder of 14 subunits composed of two heptameric rings stacked back-to-back. Interacts with the co-chaperonin GroES.

The protein localises to the cytoplasm. The catalysed reaction is ATP + H2O + a folded polypeptide = ADP + phosphate + an unfolded polypeptide.. In terms of biological role, together with its co-chaperonin GroES, plays an essential role in assisting protein folding. The GroEL-GroES system forms a nano-cage that allows encapsulation of the non-native substrate proteins and provides a physical environment optimized to promote and accelerate protein folding. The protein is Chaperonin GroEL of Verminephrobacter eiseniae (strain EF01-2).